We begin with the raw amino-acid sequence, 205 residues long: MSIMSYNGGAVMAMKGKQCVAIAADRRFGVQAQMVTTDFQKIFPMGDRLYIGLAGLATDVQTVSQRLKFRLNLYELKEGRQIKPKTFMSMVSNLLYERRFGPYYIEPVIAGLDPKTFEPFICSLDLIGCPMVTEDFVVSGTCSEQMYGMCESLWEPDMEPEDLFETISQAMLNAVDRDAVSGMGVVVQVIEKDKITTRTLKARMD.

Belongs to the peptidase T1B family. As to quaternary structure, the 26S proteasome consists of a 20S proteasome core and two 19S regulatory subunits. The 20S proteasome core is composed of 28 subunits that are arranged in four stacked rings, resulting in a barrel-shaped structure. The two end rings are each formed by seven alpha subunits, and the two central rings are each formed by seven beta subunits. The catalytic chamber with the active sites is on the inside of the barrel.

Its subcellular location is the cytoplasm. The protein localises to the nucleus. Its function is as follows. Non-catalytic component of the proteasome, a multicatalytic proteinase complex which is characterized by its ability to cleave peptides with Arg, Phe, Tyr, Leu, and Glu adjacent to the leaving group at neutral or slightly basic pH. The proteasome has an ATP-dependent proteolytic activity. This chain is Proteasome subunit beta type-3 (psmb3), found in Oncorhynchus mykiss (Rainbow trout).